Reading from the N-terminus, the 253-residue chain is Spermatogenesis-associated protein 9 (253 aa).

A helical transmembrane segment spans residues 144–166; the sequence is LTSIMCASYAALIYLTVCVNAVL. The segment covering 210-228 has biased composition (basic and acidic residues); it reads AKPYRSLPEKPDSISDRPK. The interval 210 to 231 is disordered; sequence AKPYRSLPEKPDSISDRPKLPA.

The protein resides in the membrane. Its function is as follows. May play at role in testicular development/spermatogenesis and may be an important factor in male infertility. This Bos taurus (Bovine) protein is Spermatogenesis-associated protein 9 (SPATA9).